The sequence spans 675 residues: Metal-nicotianamine transporter YSL3 (675 aa).

The next 14 membrane-spanning stretches (helical) occupy residues 42 to 62 (ITFR…VIVM), 66 to 86 (LTTG…FVFL), 114 to 134 (CAVA…LLGL), 159 to 179 (GIGW…LALV), 219 to 239 (VFGF…QWFF), 280 to 300 (IVNI…WPLI), 325 to 345 (VFIS…KILF), 386 to 406 (IPLW…IIAI), 408 to 428 (IMFP…APSL), 450 to 470 (VALF…AGLV), 504 to 524 (VSQA…FFLF), 556 to 576 (FSAL…FAVA), 602 to 622 (FLVG…VFAW), and 630 to 650 (AGLM…LWIL).

This sequence belongs to the YSL (TC 2.A.67.2) family. In terms of tissue distribution, expressed in leaves, anthers and pollen grains. Restricted to the vasculature.

The protein localises to the membrane. Functionally, may be involved in the lateral transport of nicotianamine-chelated metals in the vasculature. This Arabidopsis thaliana (Mouse-ear cress) protein is Metal-nicotianamine transporter YSL3 (YSL3).